The following is a 477-amino-acid chain: Ribulose bisphosphate carboxylase large chain (477 aa).

The propeptide occupies 1–2 (MS). Position 3 is an N-acetylproline (proline 3). Position 14 is an N6,N6,N6-trimethyllysine (lysine 14). Residues asparagine 123 and threonine 173 each coordinate substrate. Lysine 175 acts as the Proton acceptor in catalysis. Substrate is bound at residue lysine 177. 3 residues coordinate Mg(2+): lysine 201, aspartate 203, and glutamate 204. Lysine 201 carries the post-translational modification N6-carboxylysine. The Proton acceptor role is filled by histidine 294. Substrate contacts are provided by arginine 295, histidine 327, and serine 379.

Belongs to the RuBisCO large chain family. Type I subfamily. Heterohexadecamer of 8 large chains and 8 small chains; disulfide-linked. The disulfide link is formed within the large subunit homodimers. The cofactor is Mg(2+). The disulfide bond which can form in the large chain dimeric partners within the hexadecamer appears to be associated with oxidative stress and protein turnover.

It localises to the plastid. The protein localises to the chloroplast. It catalyses the reaction 2 (2R)-3-phosphoglycerate + 2 H(+) = D-ribulose 1,5-bisphosphate + CO2 + H2O. The enzyme catalyses D-ribulose 1,5-bisphosphate + O2 = 2-phosphoglycolate + (2R)-3-phosphoglycerate + 2 H(+). In terms of biological role, ruBisCO catalyzes two reactions: the carboxylation of D-ribulose 1,5-bisphosphate, the primary event in carbon dioxide fixation, as well as the oxidative fragmentation of the pentose substrate in the photorespiration process. Both reactions occur simultaneously and in competition at the same active site. The chain is Ribulose bisphosphate carboxylase large chain from Agrostis stolonifera (Creeping bentgrass).